Reading from the N-terminus, the 604-residue chain is Elongation factor 4 (604 aa).

Positions 7–189 constitute a tr-type G domain; that stretch reads SKIRNFCIIA…SIVHLVPPPS (183 aa). GTP-binding positions include 19-24 and 136-139; these read DHGKST and NKID.

Belongs to the TRAFAC class translation factor GTPase superfamily. Classic translation factor GTPase family. LepA subfamily.

It localises to the cell inner membrane. The enzyme catalyses GTP + H2O = GDP + phosphate + H(+). Its function is as follows. Required for accurate and efficient protein synthesis under certain stress conditions. May act as a fidelity factor of the translation reaction, by catalyzing a one-codon backward translocation of tRNAs on improperly translocated ribosomes. Back-translocation proceeds from a post-translocation (POST) complex to a pre-translocation (PRE) complex, thus giving elongation factor G a second chance to translocate the tRNAs correctly. Binds to ribosomes in a GTP-dependent manner. This Synechococcus sp. (strain ATCC 27144 / PCC 6301 / SAUG 1402/1) (Anacystis nidulans) protein is Elongation factor 4.